A 469-amino-acid polypeptide reads, in one-letter code: Origin recognition complex subunit 6 (469 aa).

2 stretches are compositionally biased toward low complexity: residues 218–234 (SSTLNNTTTSTTTTAPK) and 275–308 (ATPTLSSSSSSSSSSSSSLSPPLSSNPTTDLSST). Disordered stretches follow at residues 218–241 (SSTLNNTTTSTTTTAPKSPIPIPS), 275–309 (ATPTLSSSSSSSSSSSSSLSPPLSSNPTTDLSSTN), 356–423 (ESPF…EGDL), and 436–469 (KEQQFNDWKNSDFAKSKPTPVNATKQLTLDSFFK). Basic and acidic residues-rich tracts occupy residues 380-390 (SRDELEKESEL) and 409-423 (QKEKSVKNKINEGDL). The span at 454-469 (TPVNATKQLTLDSFFK) shows a compositional bias: polar residues.

It belongs to the ORC6 family. As to quaternary structure, ORC is composed of six subunits.

It localises to the nucleus. Its function is as follows. Component of the origin recognition complex (ORC) that binds origins of replication. DNA-binding is ATP-dependent, however specific DNA sequences that define origins of replication have not been identified so far. ORC is required to assemble the pre-replication complex necessary to initiate DNA replication. The sequence is that of Origin recognition complex subunit 6 (orcF) from Dictyostelium discoideum (Social amoeba).